We begin with the raw amino-acid sequence, 81 residues long: Cysteine-rich and transmembrane domain-containing protein PCC1 (81 aa).

A compositionally biased stretch (polar residues) spans 1-22 (MNQSAQNYFSVQKPSETSSGPY). The disordered stretch occupies residues 1 to 34 (MNQSAQNYFSVQKPSETSSGPYTSPPPIGYPTRD). A helical transmembrane segment spans residues 56–74 (AIMSCFSTCMECIFCCGVC).

The protein belongs to the CYSTM1 family. Expressed at very low levels in seedlings and petioles, and at higher levels in leaves. Also present in phloem sap.

The protein localises to the cell membrane. Modulates resistance against pathogens including oomycetes (e.g. Hyaloperonospora parasitica and Phytophthora brassicae) and fungi (e.g. Phytophthora brassicae). Controls the abscisic acid-mediated (ABA) signaling pathways. Regulator of the flowering time in response to stress (e.g. UV-C). Regulates polar lipid content; promotes phosphatidylinositol (PI) and 18:0 but prevents 18:2 and 18:3 polar lipids accumulation. The chain is Cysteine-rich and transmembrane domain-containing protein PCC1 (PCC1) from Arabidopsis thaliana (Mouse-ear cress).